The following is a 70-amino-acid chain: UPF0434 protein MCA0634 (70 aa).

The protein belongs to the UPF0434 family.

This is UPF0434 protein MCA0634 from Methylococcus capsulatus (strain ATCC 33009 / NCIMB 11132 / Bath).